An 88-amino-acid chain; its full sequence is Small ribosomal subunit protein bS20 (88 aa).

2 disordered regions span residues 1 to 23 (MANTTSAKKATRKIARRSAVNKA) and 65 to 88 (GVMHSNTASRKVSRLAQRVKSLSA).

The protein belongs to the bacterial ribosomal protein bS20 family.

In terms of biological role, binds directly to 16S ribosomal RNA. The chain is Small ribosomal subunit protein bS20 from Rhizobium meliloti (strain 1021) (Ensifer meliloti).